Here is a 596-residue protein sequence, read N- to C-terminus: MEEQSKNKISEEEKQLHGRPNRPKGGLITMPFIFANEICEKLAVVGFHANMISYLTTQLHLPLTKAANTLTNFAGTSSLTPLLGAFIADSFAGRFWTITFASIIYQIGMTLLTISAIIPTLRPPPCKGEEVCVVADTAQLSILYVALLLGALGSGGIRPCVVAFGADQFDESDPNQTTKTWNYFNWYYFCMGAAVLLAVTVLVWIQDNVGWGLGLGIPTVAMFLSVIAFVGGFQLYRHLVPAGSPFTRLIQVGVAAFRKRKLRMVSDPSLLYFNDEIDAPISLGGKLTHTKHMSFLDKAAIVTEEDNLKPGQIPNHWRLSTVHRVEELKSVIRMGPIGASGILLITAYAQQGTFSLQQAKTMNRHLTNSFQIPAGSMSVFTTVAMLTTIIFYDRVFVKVARKFTGLERGITFLHRMGIGFVISIIATLVAGFVEVKRKSVAIEHGLLDKPHTIVPISFLWLIPQYGLHGVAEAFMSIGHLEFFYDQAPESMRSTATALFWMAISIGNYVSTLLVTLVHKFSAKPDGSNWLPDNNLNRGRLEYFYWLITVLQAVNLVYYLWCAKIYTYKPVQVHHSKEDSSPVKEELQLSNRSLVDE.

Residues 1-16 (MEEQSKNKISEEEKQL) show a composition bias toward basic and acidic residues. Residues 1 to 23 (MEEQSKNKISEEEKQLHGRPNRP) are disordered. 12 helical membrane-spanning segments follow: residues 27–47 (LITM…VVGF), 73–93 (FAGT…SFAG), 98–118 (ITFA…SAII), 137–157 (TAQL…SGGI), 185–205 (NWYY…LVWI), 213–233 (LGLG…VGGF), 334–354 (MGPI…QGTF), 372–392 (IPAG…IIFY), 416–436 (MGIG…VEVK), 453–473 (IVPI…VAEA), 497–517 (ALFW…VTLV), and 542–562 (YFYW…LWCA).

This sequence belongs to the major facilitator superfamily. Proton-dependent oligopeptide transporter (POT/PTR) (TC 2.A.17) family. As to expression, expressed in shoots, stems, leaves, flowers and siliques.

It localises to the membrane. In terms of biological role, may act as an efflux-type nitrite transporter. Not regulated by the PII protein involved in the regulation of nitrite uptake into higher plant chloroplasts. The chain is Protein NRT1/ PTR FAMILY 3.1 (NPF3.1) from Arabidopsis thaliana (Mouse-ear cress).